The primary structure comprises 388 residues: Myosin light chain kinase family member 4 (388 aa).

Residues 106 to 361 form the Protein kinase domain; it reads VSKTEILGGG…ASEALKHPWL (256 aa). ATP contacts are provided by residues 112 to 120 and K135; that span reads LGGGRFGQV. D227 acts as the Proton acceptor in catalysis.

The protein belongs to the protein kinase superfamily. CAMK Ser/Thr protein kinase family.

It catalyses the reaction L-seryl-[protein] + ATP = O-phospho-L-seryl-[protein] + ADP + H(+). The catalysed reaction is L-threonyl-[protein] + ATP = O-phospho-L-threonyl-[protein] + ADP + H(+). The protein is Myosin light chain kinase family member 4 (MYLK4) of Homo sapiens (Human).